The chain runs to 541 residues: Chaperonin GroEL 2 (541 aa).

Residues 30–33, Lys51, 87–91, Gly414, and Asp495 each bind ATP; these read TLGP and DGTTT.

It belongs to the chaperonin (HSP60) family. In terms of assembly, forms a cylinder of 14 subunits composed of two heptameric rings stacked back-to-back. Interacts with the co-chaperonin GroES.

It is found in the cytoplasm. The catalysed reaction is ATP + H2O + a folded polypeptide = ADP + phosphate + an unfolded polypeptide.. Its function is as follows. Together with its co-chaperonin GroES, plays an essential role in assisting protein folding. The GroEL-GroES system forms a nano-cage that allows encapsulation of the non-native substrate proteins and provides a physical environment optimized to promote and accelerate protein folding. This chain is Chaperonin GroEL 2, found in Cereibacter sphaeroides (Rhodobacter sphaeroides).